Consider the following 567-residue polypeptide: DNA ligase (567 aa).

Position 246 (glutamate 246) interacts with ATP. The N6-AMP-lysine intermediate role is filled by lysine 248. Residues arginine 253, arginine 268, glutamate 298, phenylalanine 339, arginine 415, and lysine 421 each coordinate ATP.

It belongs to the ATP-dependent DNA ligase family. It depends on Mg(2+) as a cofactor.

It catalyses the reaction ATP + (deoxyribonucleotide)n-3'-hydroxyl + 5'-phospho-(deoxyribonucleotide)m = (deoxyribonucleotide)n+m + AMP + diphosphate.. In terms of biological role, DNA ligase that seals nicks in double-stranded DNA during DNA replication, DNA recombination and DNA repair. The chain is DNA ligase from Nanoarchaeum equitans (strain Kin4-M).